We begin with the raw amino-acid sequence, 99 residues long: Large ribosomal subunit protein uL23 (99 aa).

The protein belongs to the universal ribosomal protein uL23 family. Part of the 50S ribosomal subunit. Contacts protein L29, and trigger factor when it is bound to the ribosome.

One of the early assembly proteins it binds 23S rRNA. One of the proteins that surrounds the polypeptide exit tunnel on the outside of the ribosome. Forms the main docking site for trigger factor binding to the ribosome. This Magnetococcus marinus (strain ATCC BAA-1437 / JCM 17883 / MC-1) protein is Large ribosomal subunit protein uL23.